The primary structure comprises 74 residues: Large ribosomal subunit protein bL31 (74 aa).

Zn(2+) contacts are provided by C16, C18, C38, and C41.

This sequence belongs to the bacterial ribosomal protein bL31 family. Type A subfamily. Part of the 50S ribosomal subunit. Requires Zn(2+) as cofactor.

Functionally, binds the 23S rRNA. This is Large ribosomal subunit protein bL31 from Streptomyces griseus subsp. griseus (strain JCM 4626 / CBS 651.72 / NBRC 13350 / KCC S-0626 / ISP 5235).